The following is a 391-amino-acid chain: Arginine biosynthesis bifunctional protein ArgJ 2 (391 aa).

2 residues coordinate substrate: lysine 167 and serine 180. The active-site Nucleophile is serine 180.

Belongs to the ArgJ family. In terms of assembly, heterotetramer of two alpha and two beta chains.

Its subcellular location is the cytoplasm. It catalyses the reaction N(2)-acetyl-L-ornithine + L-glutamate = N-acetyl-L-glutamate + L-ornithine. The enzyme catalyses L-glutamate + acetyl-CoA = N-acetyl-L-glutamate + CoA + H(+). It participates in amino-acid biosynthesis; L-arginine biosynthesis; L-ornithine and N-acetyl-L-glutamate from L-glutamate and N(2)-acetyl-L-ornithine (cyclic): step 1/1. The protein operates within amino-acid biosynthesis; L-arginine biosynthesis; N(2)-acetyl-L-ornithine from L-glutamate: step 1/4. Its function is as follows. Catalyzes two activities which are involved in the cyclic version of arginine biosynthesis: the synthesis of N-acetylglutamate from glutamate and acetyl-CoA as the acetyl donor, and of ornithine by transacetylation between N(2)-acetylornithine and glutamate. The protein is Arginine biosynthesis bifunctional protein ArgJ 2 of Streptomyces clavuligerus.